Consider the following 134-residue polypeptide: MKKTPLLNIALSRTIAGLGHGDILVIGDAGLPVPPGVELIDLALTPGIPDFTSVLRVVLSEMQVERHVLAEEMFQAAPLGLIEVEQMHARGEIGQREVMNHADFKALTRQARAVIRTGECRPYSNIALVAGVTF.

The active-site Proton donor is the His20. Substrate-binding positions include Asp28, His101, and Tyr123–Asn125.

The protein belongs to the RbsD / FucU family. RbsD subfamily. Homodecamer.

It localises to the cytoplasm. It catalyses the reaction beta-D-ribopyranose = beta-D-ribofuranose. It functions in the pathway carbohydrate metabolism; D-ribose degradation; D-ribose 5-phosphate from beta-D-ribopyranose: step 1/2. Functionally, catalyzes the interconversion of beta-pyran and beta-furan forms of D-ribose. The sequence is that of D-ribose pyranase from Pseudomonas entomophila (strain L48).